A 178-amino-acid polypeptide reads, in one-letter code: Oligoribonuclease (178 aa).

One can recognise an Exonuclease domain in the interval 7–168 (LIWIDLEMTG…DDIRESIAEL (162 aa)). Tyr128 is an active-site residue.

It belongs to the oligoribonuclease family.

The protein localises to the cytoplasm. In terms of biological role, 3'-to-5' exoribonuclease specific for small oligoribonucleotides. The sequence is that of Oligoribonuclease from Francisella tularensis subsp. holarctica (strain FTNF002-00 / FTA).